The sequence spans 240 residues: Proteasome subunit alpha (240 aa).

Belongs to the peptidase T1A family. The 20S proteasome core is composed of 14 alpha and 14 beta subunits that assemble into four stacked heptameric rings, resulting in a barrel-shaped structure. The two inner rings, each composed of seven catalytic beta subunits, are sandwiched by two outer rings, each composed of seven alpha subunits. The catalytic chamber with the active sites is on the inside of the barrel. Has a gated structure, the ends of the cylinder being occluded by the N-termini of the alpha-subunits. Is capped by the proteasome-associated ATPase, ARC.

The protein localises to the cytoplasm. The protein operates within protein degradation; proteasomal Pup-dependent pathway. Its activity is regulated as follows. The formation of the proteasomal ATPase ARC-20S proteasome complex, likely via the docking of the C-termini of ARC into the intersubunit pockets in the alpha-rings, may trigger opening of the gate for substrate entry. Interconversion between the open-gate and close-gate conformations leads to a dynamic regulation of the 20S proteasome proteolysis activity. In terms of biological role, component of the proteasome core, a large protease complex with broad specificity involved in protein degradation. In Frankia casuarinae (strain DSM 45818 / CECT 9043 / HFP020203 / CcI3), this protein is Proteasome subunit alpha.